The following is a 1358-amino-acid chain: DNA-directed RNA polymerase subunit beta (1358 aa).

It belongs to the RNA polymerase beta chain family. As to quaternary structure, the RNAP catalytic core consists of 2 alpha, 1 beta, 1 beta' and 1 omega subunit. When a sigma factor is associated with the core the holoenzyme is formed, which can initiate transcription.

It catalyses the reaction RNA(n) + a ribonucleoside 5'-triphosphate = RNA(n+1) + diphosphate. Functionally, DNA-dependent RNA polymerase catalyzes the transcription of DNA into RNA using the four ribonucleoside triphosphates as substrates. The sequence is that of DNA-directed RNA polymerase subunit beta from Francisella tularensis subsp. novicida (strain U112).